The sequence spans 580 residues: MHNVSTTTTGFPLAKILTSTELGDNTIQAANDAANKLFSLTIADLTANQNINTTNAHSTSNILIPELKAPKSLNASSQLTLLIGNLIQILGEKSLTALTNKITAWKSQQQARQQKNLEFSDKINTLLSETEGLTRDYEKQINKLKNADSKIKDLENKINQIQTRLSELDPESPEKKKLSREEIQLTIKKDAAVKDRTLIEQKTLSIHSKLTDKSMQLEKEIDSFSAFSNTASAEQLSTQQKSLTGLASVTQLMATFIQLVGKNNEESLKNDLALFQSLQESRKTEMERKSDEYAAEVRKAEELNRVMGCVGKILGALLTIVSVVAAAFSGGASLALAAVGLALMVTDAIVQAATGNSFMEQALNPIMKAVIEPLIKLLSDAFTKMLEGLGVDSKKAKMIGSILGAIAGALVLVAAVVLVATVGKQAAAKLAENIGKIIGKTLTDLIPKFLKNFSSQLDDLITNAVARLNKFLGAAGDEVISKQIISTHLNQAVLLGESVNSATQAGGSVASAVFQNSASTNLADLTLSKYQVEQLSKYISEAIEKFGQLQEVIADLLASMSNSQANRTDVAKAILQQTTA.

2 ipgC chaperone binding domain regions span residues 15–45 and 51–72; these read KILT…IADL and INTT…APKS. The segment at 61–70 is mediates interaction with human MAD2L2; that stretch reads NILIPELKAP. Residues 104-224 are a coiled coil; sequence AWKSQQQARQ…MQLEKEIDSF (121 aa). The next 2 membrane-spanning stretches (helical) occupy residues 313–333 and 399–419; these read ILGA…GGAS and IGSI…VVLV.

It belongs to the SctE/SipB/YopB family. In terms of assembly, the core secretion machinery of the T3SS is composed of approximately 20 different proteins, including cytoplasmic components, a base, an export apparatus and a needle. This subunit is involved in the formation of a pore, called the translocon, in host membrane. Interacts with IpaC/SctB. Interacts with the needle tip protein IpaD/SctA. Interacts with the molecular chaperone IpgC, which prevents premature association with IpaC/SctB within the cytoplasm of Shigella cells and protects IpaB/SctE from proteolysis. Interacts with the host protein ICE in the cytoplasm of infected macrophages. Interacts with human MAD2L2 in the G2/M phase of the cell cycle.

Its subcellular location is the secreted. The protein localises to the host membrane. It localises to the host cell. The protein resides in the host nucleus. Interaction with the membrane is affected by the pH. IpaB/SctE is more efficient in destabilizing the membrane at pH 5.0 than at neutral pH. Functionally, component of the type III secretion system (T3SS), also called injectisome, which is used to inject bacterial effector proteins into eukaryotic host cells. IpaB/SctE and IpaC/SctB are inserted into the host membrane where they form a pore and allow the translocation of effector proteins into the cytosol of target cells. Interaction with IpaD/SctA at needle tips leads to the formation of the MxiH/SctF-IpaD/SctA-IpaB/SctE ternary complex, which is essential for host cell sensing. Interaction of IpaB/SctE with host membrane lipids promotes recruitment of IpaC/SctB at the needle tip concomitant with translocon insertion into the host membrane and type III secretion induction. Required for efficient dissemination. Necessary for lysis of the two cellular membranes that surround bacteria in protrusions during cell-to-cell spread. Is sufficient to induce macrophage apoptosis through activation of the interleukin-1 beta converting enzyme (ICE) in infected macrophages. In epithelial cells, causes cell-cycle arrest by targeting host MAD2L2, an anaphase-promoting complex/cyclosome (APC) inhibitor. This chain is Type 3 secretion system translocon protein SctE, found in Shigella flexneri.